A 120-amino-acid polypeptide reads, in one-letter code: Large ribosomal subunit protein bL19 (120 aa).

This sequence belongs to the bacterial ribosomal protein bL19 family.

Functionally, this protein is located at the 30S-50S ribosomal subunit interface and may play a role in the structure and function of the aminoacyl-tRNA binding site. The chain is Large ribosomal subunit protein bL19 from Trichormus variabilis (strain ATCC 29413 / PCC 7937) (Anabaena variabilis).